The primary structure comprises 388 residues: Diacylglycerol O-acyltransferase 2 (388 aa).

The Cytoplasmic portion of the chain corresponds to 1 to 69; that stretch reads MKTLIAAYSG…NRSKVEKQLQ (69 aa). Residues 70-88 form a helical membrane-spanning segment; sequence VISVLQWVLSFLVLGVACS. The Lumenal segment spans residues 89–92; that stretch reads VILM. The helical transmembrane segment at 93-112 threads the bilayer; sequence YTFCTDCWLIAVLYFTWLAF. Topologically, residues 113–388 are cytoplasmic; that stretch reads DWNTPKKGGR…LPETEVLEVN (276 aa).

It belongs to the diacylglycerol acyltransferase family. In terms of assembly, forms multimeric complexes consisting of several DGAT2 subunits. Interacts with SLC27A1 and this interaction is enhanced in the presence of ZFYVE1. In terms of tissue distribution, predominantly expressed in liver. Also expressed in testis.

The protein localises to the endoplasmic reticulum membrane. It is found in the lipid droplet. Its subcellular location is the cytoplasm. It localises to the perinuclear region. The enzyme catalyses an acyl-CoA + a 1,2-diacyl-sn-glycerol = a triacyl-sn-glycerol + CoA. It catalyses the reaction all-trans-retinol + an acyl-CoA = an all-trans-retinyl ester + CoA. The catalysed reaction is 1,2-di-(9Z-octadecenoyl)-sn-glycerol + hexadecanoyl-CoA = 1,2-di-(9Z)-octadecenoyl-3-hexadecanoyl-sn-glycerol + CoA. It carries out the reaction 1,2-di-(9Z-octadecenoyl)-sn-glycerol + (9Z)-octadecenoyl-CoA = 1,2,3-tri-(9Z-octadecenoyl)-glycerol + CoA. The enzyme catalyses 1,3-di-(9Z-octadecenoyl)-glycerol + (9Z)-octadecenoyl-CoA = 1,2,3-tri-(9Z-octadecenoyl)-glycerol + CoA. It catalyses the reaction 2,3-di-(9Z)-octadecenoyl-sn-glycerol + (9Z)-octadecenoyl-CoA = 1,2,3-tri-(9Z-octadecenoyl)-glycerol + CoA. The catalysed reaction is 2-(9Z-octadecenoyl)-glycerol + hexadecanoyl-CoA = 1-hexadecanoyl-2-(9Z-octadecenoyl)-sn-glycerol + CoA. It carries out the reaction 2-(9Z-octadecenoyl)-glycerol + (9Z)-octadecenoyl-CoA = 1,2-di-(9Z-octadecenoyl)-sn-glycerol + CoA. The enzyme catalyses all-trans-retinol + hexadecanoyl-CoA = all-trans-retinyl hexadecanoate + CoA. It catalyses the reaction 1-O-(9Z-octadecenyl)-glycerol + (9Z)-octadecenoyl-CoA = 1-O-(9Z-octadecyl)-3-(9Z-octadecenoyl)-glycerol + CoA. The catalysed reaction is 1-(9Z-octadecenoyl)-glycerol + (9Z)-octadecenoyl-CoA = 1,2-di-(9Z-octadecenoyl)-glycerol + CoA. It participates in glycerolipid metabolism; triacylglycerol biosynthesis. Inhibited by niacin. In terms of biological role, essential acyltransferase that catalyzes the terminal and only committed step in triacylglycerol synthesis by using diacylglycerol and fatty acyl CoA as substrates. Required for synthesis and storage of intracellular triglycerides. Probably plays a central role in cytosolic lipid accumulation. In liver, is primarily responsible for incorporating endogenously synthesized fatty acids into triglycerides. Also functions as an acyl-CoA retinol acyltransferase (ARAT). Also able to use 1-monoalkylglycerol (1-MAkG) as an acyl acceptor for the synthesis of monoalkyl-monoacylglycerol (MAMAG). The sequence is that of Diacylglycerol O-acyltransferase 2 from Mus musculus (Mouse).